A 334-amino-acid chain; its full sequence is L-lactate dehydrogenase C chain (334 aa).

NAD(+)-binding positions include 30–58 (GQVG…VEDK) and Arg100. Residues Arg107, Asn139, and Arg170 each coordinate substrate. Asn139 contributes to the NAD(+) binding site. His194 (proton acceptor) is an active-site residue. Thr249 contacts substrate.

This sequence belongs to the LDH/MDH superfamily. LDH family. Homotetramer. In terms of tissue distribution, eye and liver.

The protein localises to the cytoplasm. The catalysed reaction is (S)-lactate + NAD(+) = pyruvate + NADH + H(+). It participates in fermentation; pyruvate fermentation to lactate; (S)-lactate from pyruvate: step 1/1. This Fundulus heteroclitus (Killifish) protein is L-lactate dehydrogenase C chain (ldhc).